We begin with the raw amino-acid sequence, 279 residues long: NAD kinase (279 aa).

Aspartate 61 acts as the Proton acceptor in catalysis. NAD(+) is bound by residues 61–62 (DG), 138–139 (ND), lysine 149, lysine 166, aspartate 168, and 179–184 (TGYSFS).

The protein belongs to the NAD kinase family. The cofactor is a divalent metal cation.

The protein localises to the cytoplasm. It carries out the reaction NAD(+) + ATP = ADP + NADP(+) + H(+). Functionally, involved in the regulation of the intracellular balance of NAD and NADP, and is a key enzyme in the biosynthesis of NADP. Catalyzes specifically the phosphorylation on 2'-hydroxyl of the adenosine moiety of NAD to yield NADP. The sequence is that of NAD kinase from Borreliella burgdorferi (strain ATCC 35210 / DSM 4680 / CIP 102532 / B31) (Borrelia burgdorferi).